The primary structure comprises 95 residues: Aspartyl/glutamyl-tRNA(Asn/Gln) amidotransferase subunit C (95 aa).

Belongs to the GatC family. In terms of assembly, heterotrimer of A, B and C subunits.

The enzyme catalyses L-glutamyl-tRNA(Gln) + L-glutamine + ATP + H2O = L-glutaminyl-tRNA(Gln) + L-glutamate + ADP + phosphate + H(+). The catalysed reaction is L-aspartyl-tRNA(Asn) + L-glutamine + ATP + H2O = L-asparaginyl-tRNA(Asn) + L-glutamate + ADP + phosphate + 2 H(+). Allows the formation of correctly charged Asn-tRNA(Asn) or Gln-tRNA(Gln) through the transamidation of misacylated Asp-tRNA(Asn) or Glu-tRNA(Gln) in organisms which lack either or both of asparaginyl-tRNA or glutaminyl-tRNA synthetases. The reaction takes place in the presence of glutamine and ATP through an activated phospho-Asp-tRNA(Asn) or phospho-Glu-tRNA(Gln). The polypeptide is Aspartyl/glutamyl-tRNA(Asn/Gln) amidotransferase subunit C (Prochlorococcus marinus (strain NATL2A)).